The chain runs to 358 residues: 3-isopropylmalate dehydrogenase (358 aa).

Position 79 to 92 (79 to 92 (GPKWEHLPPDEQPE)) interacts with NAD(+). Substrate-binding residues include R100, R110, R139, and D227. 3 residues coordinate Mg(2+): D227, D251, and D255. 285-297 (GSAPDIAGKGVAN) provides a ligand contact to NAD(+).

The protein belongs to the isocitrate and isopropylmalate dehydrogenases family. LeuB type 1 subfamily. As to quaternary structure, homodimer. The cofactor is Mg(2+). It depends on Mn(2+) as a cofactor.

Its subcellular location is the cytoplasm. The catalysed reaction is (2R,3S)-3-isopropylmalate + NAD(+) = 4-methyl-2-oxopentanoate + CO2 + NADH. Its pathway is amino-acid biosynthesis; L-leucine biosynthesis; L-leucine from 3-methyl-2-oxobutanoate: step 3/4. In terms of biological role, catalyzes the oxidation of 3-carboxy-2-hydroxy-4-methylpentanoate (3-isopropylmalate) to 3-carboxy-4-methyl-2-oxopentanoate. The product decarboxylates to 4-methyl-2 oxopentanoate. The chain is 3-isopropylmalate dehydrogenase from Pseudoalteromonas translucida (strain TAC 125).